The primary structure comprises 405 residues: S-arrestin (405 aa).

Thr-234 carries the phosphothreonine modification.

It belongs to the arrestin family. As to quaternary structure, monomer. Homodimer. Homotetramer. Interacts with RHO (via the phosphorylated C-terminus). Detected in retina, in the proximal portion of the outer segment of rod photoreceptor cells (at protein level).

The protein resides in the cell projection. It is found in the cilium. Its subcellular location is the photoreceptor outer segment. The protein localises to the membrane. Functionally, binds to photoactivated, phosphorylated RHO and terminates RHO signaling via G-proteins by competing with G-proteins for the same binding site on RHO. May play a role in preventing light-dependent degeneration of retinal photoreceptor cells. This chain is S-arrestin (SAG), found in Homo sapiens (Human).